The chain runs to 230 residues: Uracil-DNA glycosylase (230 aa).

Asp71 functions as the Proton acceptor in the catalytic mechanism.

It belongs to the uracil-DNA glycosylase (UDG) superfamily. UNG family.

It localises to the cytoplasm. The enzyme catalyses Hydrolyzes single-stranded DNA or mismatched double-stranded DNA and polynucleotides, releasing free uracil.. Its function is as follows. Excises uracil residues from the DNA which can arise as a result of misincorporation of dUMP residues by DNA polymerase or due to deamination of cytosine. This Tropheryma whipplei (strain TW08/27) (Whipple's bacillus) protein is Uracil-DNA glycosylase.